A 353-amino-acid polypeptide reads, in one-letter code: Lactosylceramide 4-alpha-galactosyltransferase (353 aa).

The Cytoplasmic segment spans residues 1-22 (MSKPPDLLLRLLRGAPRQRVCT). A helical; Signal-anchor for type II membrane protein membrane pass occupies residues 23–43 (LFIIGFKFTFFVSIMIYWHVV). Residues 44-353 (GEPKEKGQLY…TTHEAMKMYL (310 aa)) are Lumenal-facing. Asparagine 121 carries an N-linked (GlcNAc...) asparagine glycan. The DXD motif motif lies at 192 to 194 (DTD). An N-linked (GlcNAc...) asparagine glycan is attached at asparagine 203.

It belongs to the glycosyltransferase 32 family.

Its subcellular location is the golgi apparatus membrane. The enzyme catalyses a beta-D-Gal-(1-&gt;4)-beta-D-Glc-(1&lt;-&gt;1)-Cer(d18:1(4E)) + UDP-alpha-D-galactose = a globoside Gb3Cer (d18:1(4E)) + UDP + H(+). It catalyses the reaction a beta-D-Gal-(1&lt;-&gt;1')-ceramide + UDP-alpha-D-galactose = alpha-D-Gal-(1-&gt;4)-beta-D-Gal-(1&lt;-&gt;1')-Cer + UDP + H(+). It functions in the pathway glycolipid biosynthesis. Catalyzes the transfer of galactose from UDP-alpha-D-galactose to lactosylceramide/beta-D-galactosyl-(1-&gt;4)-beta-D-glucosyl-(1&lt;-&gt;1)-ceramide(d18:1(4E)) to produce globotriaosylceramide/globoside Gb3Cer (d18:1(4E)). Also able to transfer galactose to galactosylceramide/beta-D-Gal-(1&lt;-&gt;1')-Cer. Globoside Gb3Cer is a glycosphingolipid of the globo serie, one of the major types of neutral root structures of glycosphingolipids, that constitute a significant portion of mammalian cell membranes. This is Lactosylceramide 4-alpha-galactosyltransferase (A4GALT) from Pan troglodytes (Chimpanzee).